A 234-amino-acid chain; its full sequence is Small ribosomal subunit protein uS10m (234 aa).

A mitochondrion-targeting transit peptide spans methionine 1–tyrosine 23.

The protein belongs to the universal ribosomal protein uS10 family. In terms of assembly, component of the mitochondrial small ribosomal subunit (mt-SSU).

It localises to the mitochondrion. Component of the mitochondrial ribosome (mitoribosome), a dedicated translation machinery responsible for the synthesis of mitochondrial genome-encoded proteins, including at least some of the essential transmembrane subunits of the mitochondrial respiratory chain. The mitoribosomes are attached to the mitochondrial inner membrane and translation products are cotranslationally integrated into the membrane. This Candida albicans (strain SC5314 / ATCC MYA-2876) (Yeast) protein is Small ribosomal subunit protein uS10m (RSM10).